The following is a 319-amino-acid chain: Cytochrome c biogenesis protein CcsA (319 aa).

The next 7 membrane-spanning stretches (helical) occupy residues I9–L29, G44–G64, L71–F91, M143–I163, I225–N245, T259–H273, and A286–L306.

Belongs to the CcmF/CycK/Ccl1/NrfE/CcsA family. In terms of assembly, may interact with Ccs1.

It is found in the plastid. The protein localises to the chloroplast thylakoid membrane. Required during biogenesis of c-type cytochromes (cytochrome c6 and cytochrome f) at the step of heme attachment. In Oenothera glazioviana (Large-flowered evening primrose), this protein is Cytochrome c biogenesis protein CcsA.